Reading from the N-terminus, the 372-residue chain is tRNA 2-selenouridine synthase (372 aa).

A Rhodanese domain is found at Phe-17–Glu-140. Catalysis depends on Cys-100, which acts as the S-selanylcysteine intermediate.

The protein belongs to the SelU family. In terms of assembly, monomer.

It catalyses the reaction 5-methylaminomethyl-2-thiouridine(34) in tRNA + selenophosphate + (2E)-geranyl diphosphate + H2O + H(+) = 5-methylaminomethyl-2-selenouridine(34) in tRNA + (2E)-thiogeraniol + phosphate + diphosphate. It carries out the reaction 5-methylaminomethyl-2-thiouridine(34) in tRNA + (2E)-geranyl diphosphate = 5-methylaminomethyl-S-(2E)-geranyl-thiouridine(34) in tRNA + diphosphate. The catalysed reaction is 5-methylaminomethyl-S-(2E)-geranyl-thiouridine(34) in tRNA + selenophosphate + H(+) = 5-methylaminomethyl-2-(Se-phospho)selenouridine(34) in tRNA + (2E)-thiogeraniol. The enzyme catalyses 5-methylaminomethyl-2-(Se-phospho)selenouridine(34) in tRNA + H2O = 5-methylaminomethyl-2-selenouridine(34) in tRNA + phosphate. Functionally, involved in the post-transcriptional modification of the uridine at the wobble position (U34) of tRNA(Lys), tRNA(Glu) and tRNA(Gln). Catalyzes the conversion of 2-thiouridine (S2U-RNA) to 2-selenouridine (Se2U-RNA). Acts in a two-step process involving geranylation of 2-thiouridine (S2U) to S-geranyl-2-thiouridine (geS2U) and subsequent selenation of the latter derivative to 2-selenouridine (Se2U) in the tRNA chain. The chain is tRNA 2-selenouridine synthase from Serratia proteamaculans (strain 568).